Here is a 211-residue protein sequence, read N- to C-terminus: Phosphoheptose isomerase (211 aa).

Residues 50–211 enclose the SIS domain; sequence IAGTFEDGGK…VERMLGYCRL (162 aa). Residue 65–67 coordinates substrate; that stretch reads NGG. Residues His74 and Glu78 each contribute to the Zn(2+) site. Substrate contacts are provided by residues Glu78, 109–110, 135–137, Ser140, and Gln188; these read ND and STS. Zn(2+)-binding residues include Gln188 and His196.

The protein belongs to the SIS family. GmhA subfamily. Zn(2+) is required as a cofactor.

It localises to the cytoplasm. The enzyme catalyses 2 D-sedoheptulose 7-phosphate = D-glycero-alpha-D-manno-heptose 7-phosphate + D-glycero-beta-D-manno-heptose 7-phosphate. It participates in carbohydrate biosynthesis; D-glycero-D-manno-heptose 7-phosphate biosynthesis; D-glycero-alpha-D-manno-heptose 7-phosphate and D-glycero-beta-D-manno-heptose 7-phosphate from sedoheptulose 7-phosphate: step 1/1. Functionally, catalyzes the isomerization of sedoheptulose 7-phosphate in D-glycero-D-manno-heptose 7-phosphate. In Pelodictyon phaeoclathratiforme (strain DSM 5477 / BU-1), this protein is Phosphoheptose isomerase.